The primary structure comprises 233 residues: Small ribosomal subunit protein uS2 (233 aa).

The protein belongs to the universal ribosomal protein uS2 family.

The protein is Small ribosomal subunit protein uS2 of Clostridium beijerinckii (strain ATCC 51743 / NCIMB 8052) (Clostridium acetobutylicum).